A 505-amino-acid polypeptide reads, in one-letter code: AMP phosphorylase (505 aa).

Residues G170, 196–201, and T205 contribute to the AMP site; that span reads SRAITS. D258 (proton donor) is an active-site residue. AMP-binding residues include S266 and K290.

This sequence belongs to the thymidine/pyrimidine-nucleoside phosphorylase family. Type 2 subfamily.

It catalyses the reaction AMP + phosphate = alpha-D-ribose 1,5-bisphosphate + adenine. The catalysed reaction is CMP + phosphate = cytosine + alpha-D-ribose 1,5-bisphosphate. It carries out the reaction UMP + phosphate = alpha-D-ribose 1,5-bisphosphate + uracil. Its function is as follows. Catalyzes the conversion of AMP and phosphate to adenine and ribose 1,5-bisphosphate (R15P). Exhibits phosphorylase activity toward CMP and UMP in addition to AMP. Functions in an archaeal AMP degradation pathway, together with R15P isomerase and RubisCO. The chain is AMP phosphorylase from Methanococcus maripaludis (strain C5 / ATCC BAA-1333).